Reading from the N-terminus, the 418-residue chain is Phosphoglycerate kinase (418 aa).

Positions 23, 24, 25, 26, 39, 40, 63, 64, 66, 67, 122, 123, 170, and 171 each coordinate (2R)-3-phosphoglycerate. Glycine 214 contributes to the ADP binding site. Glycine 214 serves as a coordination point for CDP. AMP is bound by residues alanine 215 and lysine 216. Residue alanine 215 participates in ATP binding. Alanine 215 provides a ligand contact to Mg(2+). Aspartate 219 is a CDP binding site. Aspartate 219 provides a ligand contact to Mg(2+). Lysine 220 is a binding site for AMP. Lysine 220 lines the ATP pocket. Glycine 238 contacts ADP. Glycine 238 lines the CDP pocket. The AMP site is built by glycine 239 and glycine 313. 2 residues coordinate ATP: glycine 239 and glycine 313. Residues glycine 338, alanine 340, and phenylalanine 343 each contribute to the CDP site. Phenylalanine 343 lines the ADP pocket. Glutamate 344 contacts AMP. ATP-binding residues include glutamate 344, aspartate 375, and threonine 376. Aspartate 375 contributes to the Mg(2+) binding site.

Belongs to the phosphoglycerate kinase family. As to quaternary structure, monomer. Requires Mg(2+) as cofactor.

Its subcellular location is the cytoplasm. The protein resides in the mitochondrion. It carries out the reaction (2R)-3-phosphoglycerate + ATP = (2R)-3-phospho-glyceroyl phosphate + ADP. It functions in the pathway carbohydrate degradation; glycolysis; pyruvate from D-glyceraldehyde 3-phosphate: step 2/5. In terms of biological role, catalyzes one of the two ATP producing reactions in the glycolytic pathway via the reversible conversion of 1,3-diphosphoglycerate to 3-phosphoglycerate. Both L- and D- forms of purine and pyrimidine nucleotides can be used as substrates, but the activity is much lower on pyrimidines. Negatively regulates the biosynthesis of acetyl-CoA from pyruvate in the mitochondrion. The polypeptide is Phosphoglycerate kinase (pgk-1) (Neurospora crassa (strain ATCC 24698 / 74-OR23-1A / CBS 708.71 / DSM 1257 / FGSC 987)).